Consider the following 719-residue polypeptide: MALKDYALEKEKVKKFLQEFYQDDELGKKQFKYGNQLVRLAHREQVALYVDLDDVAEDDPELVDSICENARRYAKLFADAVQELLPQYKEREVVNKDVLDVYIEHRLMMEQRSRDPGMVRSPQNQYPAELMRRFELYFQGPSSNKPRVIREVRADSVGKLVTVRGIVTRVSEVKPKMVVATYTCDQCGAETYQPIQSPTFMPLIMCPSQECQTNRSGGRLYLQTRGSRFIKFQEMKMQEHSDQVPVGNIPRSITVLVEGENTRIAQPGDHVSVTGIFLPILRTGFRQVVQGLLSETYLEAHRIVKMNKSEDDESGAGELTREELRQIAEEDFYEKLAASIAPEIYGHEDVKKALLLLLVGGVDQSPRGMKIRGNINICLMGDPGVAKSQLLSYIDRLAPRSQYTTGRGSSGVGLTAAVLRDSVSGELTLEGGALVLADQGVCCIDEFDKMAEADRTAIHEVMEQQTISIAKAGILTTLNARCSILAAANPAYGRYNPRRSLEQNIQLPAALLSRFDLLWLIQDRPDRDNDLRLAQHITYVHQHSRQPPSQFEPLDMKLMRRYIAMCREKQPMVPESLADYITAAYVEMRREAWASKDATYTSARTLLAILRLSTALARLRMVDVVEKEDVNEAIRLMEMSKDSLLGDKGQTARTQRPADVIFATVRELVSGGRSVRFSEAEQRCVSRGFTPAQFQAALDEYEELNVWQVNASRTRITFV.

Ala-2 bears the N-acetylalanine mark. Glycyl lysine isopeptide (Lys-Gly) (interchain with G-Cter in SUMO2) cross-links involve residues Lys-15 and Lys-28. Residues Ser-121 and Ser-314 each carry the phosphoserine modification. In terms of domain architecture, MCM spans 332–538 (FYEKLAASIA…NDLRLAQHIT (207 aa)). Residue Tyr-345 participates in ATP binding. Ser-365 is modified (phosphoserine). Positions 384, 386, 387, 388, and 489 each coordinate ATP. Ser-500 carries the phosphoserine modification. The Arginine finger motif lies at 513-516 (SRFD). Arg-514 serves as a coordination point for ATP. The interaction with RAD17 stretch occupies residues 521–564 (IQDRPDRDNDLRLAQHITYVHQHSRQPPSQFEPLDMKLMRRYIA). Positions 577 to 719 (LADYITAAYV…NASRTRITFV (143 aa)) are interaction with ATRIP. Arg-604 contacts ATP. Position 678 is a phosphoserine (Ser-678).

This sequence belongs to the MCM family. Component of the MCM2-7 complex. The complex forms a toroidal hexameric ring with the proposed subunit order MCM2-MCM6-MCM4-MCM7-MCM3-MCM5. Component of the CMG helicase complex, a hexameric ring of related MCM2-7 subunits stabilized by CDC45 and the tetrameric GINS complex. Interacts with the ATR-ATRIP complex and with RAD17. Interacts with TIPIN. Interacts with MCMBP. Interacts with ANKRD17. Component of the replisome complex composed of at least DONSON, MCM2, MCM7, PCNA and TICRR. In terms of processing, O-glycosylated (O-GlcNAcylated), in a cell cycle-dependent manner. Post-translationally, ubiquitinated by ECS(LRR1) E3 ubiquitin-protein ligase complex when forks converge following formation of DNA interstrand cross-links. During mitosis, ubiquitinated by TRAIP when forks converge following formation of DNA interstrand cross-links. Short ubiquitin chains on MCM7 promote recruitment of DNA glycosylase NEIL3. If the interstrand cross-link cannot be cleaved by NEIL3, the ubiquitin chains continue to grow on MCM7, promoting the unloading of the CMG helicase complex by the VCP/p97 ATPase.

Its subcellular location is the nucleus. It localises to the chromosome. The catalysed reaction is ATP + H2O = ADP + phosphate + H(+). Its function is as follows. Acts as a component of the MCM2-7 complex (MCM complex) which is the replicative helicase essential for 'once per cell cycle' DNA replication initiation and elongation in eukaryotic cells. Core component of CDC45-MCM-GINS (CMG) helicase, the molecular machine that unwinds template DNA during replication, and around which the replisome is built. The active ATPase sites in the MCM2-7 ring are formed through the interaction surfaces of two neighboring subunits such that a critical structure of a conserved arginine finger motif is provided in trans relative to the ATP-binding site of the Walker A box of the adjacent subunit. The six ATPase active sites, however, are likely to contribute differentially to the complex helicase activity. Required for S-phase checkpoint activation upon UV-induced damage. The polypeptide is DNA replication licensing factor MCM7 (Homo sapiens (Human)).